We begin with the raw amino-acid sequence, 204 residues long: Large ribosomal subunit protein eL15 (204 aa).

The protein belongs to the eukaryotic ribosomal protein eL15 family. In terms of assembly, component of the large ribosomal subunit.

It localises to the cytoplasm. In terms of biological role, component of the large ribosomal subunit. The ribosome is a large ribonucleoprotein complex responsible for the synthesis of proteins in the cell. This chain is Large ribosomal subunit protein eL15 (rpl15), found in Mylopharyngodon piceus (Black carp).